The primary structure comprises 1216 residues: 1-phosphatidylinositol 4,5-bisphosphate phosphodiesterase beta-1 (1216 aa).

Cys17 carries S-palmitoyl cysteine lipidation. Ser236 bears the Phosphoserine mark. A PI-PLC X-box domain is found at 316 to 467 (EDMSQPLSHY…LMYKILVKNK (152 aa)). Active-site residues include His331 and His378. The residue at position 417 (Ser417) is a Phosphoserine. A disordered region spans residues 469–534 (KSHKSSEGSG…MDEGTAGSEA (66 aa)). Basic and acidic residues predominate over residues 472–483 (KSSEGSGKKKLS). Over residues 491-501 (SDSSSVFEPSS) the composition is skewed to low complexity. Positions 507-518 (ADTESDDDDDDD) are enriched in acidic residues. Thr509 is modified (phosphothreonine). 2 positions are modified to phosphoserine: Ser511 and Ser582. The PI-PLC Y-box domain maps to 540-656 (MSNLVNYIQP…GYRLKPEFMR (117 aa)). The C2 domain occupies 656–786 (RRPDKHFDPF…RNERNQPLTL (131 aa)). 4 disordered regions span residues 834 to 891 (DEEE…VKAP), 967 to 989 (EKSAKKDSKKKSEPSSPDHGSSA), 1072 to 1095 (MDKKRQEKITEAKSKDKSQMEEEK), and 1173 to 1216 (ISED…DTPL). Residues 846–868 (ETSSEAPSETRTTPAENGVNHTA) show a composition bias toward polar residues. Ser887 carries the post-translational modification Phosphoserine; by PKC. A compositionally biased stretch (basic and acidic residues) spans 967–979 (EKSAKKDSKKKSE). A phosphoserine mark is found at Ser978 and Ser987. The segment covering 1075–1095 (KRQEKITEAKSKDKSQMEEEK) has biased composition (basic and acidic residues). Phosphoserine is present on residues Ser1197, Ser1199, and Ser1200. Over residues 1205–1216 (RENPGREFDTPL) the composition is skewed to basic and acidic residues.

As to quaternary structure, interacts with DGKQ. Ca(2+) is required as a cofactor. In terms of processing, palmitoylated. Palmitoylation at Cys-17 by ZDHHC21 regulates the signaling activity of PLCB1 and the function of the endothelial barrier. Palmitoylation by ZDHHC21 is stimulated by inflammation.

It is found in the nucleus membrane. The protein localises to the cytoplasm. The enzyme catalyses a 1,2-diacyl-sn-glycero-3-phospho-(1D-myo-inositol-4,5-bisphosphate) + H2O = 1D-myo-inositol 1,4,5-trisphosphate + a 1,2-diacyl-sn-glycerol + H(+). It catalyses the reaction a 1,2-diacyl-sn-glycero-3-phospho-(1D-myo-inositol) + H2O = 1D-myo-inositol 1-phosphate + a 1,2-diacyl-sn-glycerol + H(+). In terms of biological role, catalyzes the hydrolysis of 1-phosphatidylinositol 4,5-bisphosphate into diacylglycerol (DAG) and inositol 1,4,5-trisphosphate (IP3) and mediates intracellular signaling downstream of G protein-coupled receptors. Regulates the function of the endothelial barrier. This is 1-phosphatidylinositol 4,5-bisphosphate phosphodiesterase beta-1 from Mus musculus (Mouse).